The primary structure comprises 100 residues: Small ribosomal subunit protein bS20 (100 aa).

The span at 1–18 shows a compositional bias: basic and acidic residues; the sequence is MPNKKSAEKRVRQSEQRR. The segment at 1–26 is disordered; sequence MPNKKSAEKRVRQSEQRRQKNRGYQK.

Belongs to the bacterial ribosomal protein bS20 family.

Binds directly to 16S ribosomal RNA. This is Small ribosomal subunit protein bS20 from Petrotoga mobilis (strain DSM 10674 / SJ95).